The chain runs to 546 residues: Chaperonin GroEL 2 (546 aa).

Residues 30–33 (TLGP), lysine 51, 87–91 (DGTTT), glycine 415, and aspartate 495 each bind ATP.

It belongs to the chaperonin (HSP60) family. In terms of assembly, forms a cylinder of 14 subunits composed of two heptameric rings stacked back-to-back. Interacts with the co-chaperonin GroES.

The protein localises to the cytoplasm. The enzyme catalyses ATP + H2O + a folded polypeptide = ADP + phosphate + an unfolded polypeptide.. Together with its co-chaperonin GroES, plays an essential role in assisting protein folding. The GroEL-GroES system forms a nano-cage that allows encapsulation of the non-native substrate proteins and provides a physical environment optimized to promote and accelerate protein folding. This chain is Chaperonin GroEL 2, found in Burkholderia cenocepacia (strain HI2424).